Consider the following 199-residue polypeptide: Ras-related protein Rab-7b (199 aa).

GTP is bound by residues 15–22 (GAIGVGKT), 34–40 (YEEYQTT), 63–67 (DTGGQ), 124–127 (NKID), and 154–155 (AK). Short sequence motifs (switch) lie at residues 28–41 (YVHK…QTTL) and 67–82 (QERF…KGSD). Ser186 carries the phosphoserine modification. 2 S-geranylgeranyl cysteine lipidation sites follow: Cys198 and Cys199.

It belongs to the small GTPase superfamily. Rab family. Expressed in heart, placenta, lung, skeletal muscle and peripheral blood leukocyte.

It is found in the late endosome. It localises to the lysosome. The protein resides in the golgi apparatus. Its subcellular location is the trans-Golgi network. The protein localises to the cytoplasmic vesicle. It is found in the phagosome. It localises to the phagosome membrane. In terms of biological role, controls vesicular trafficking from endosomes to the trans-Golgi network (TGN). Acts as a negative regulator of TLR9 signaling and can suppress TLR9-triggered TNFA, IL6, and IFNB production in macrophages by promoting TLR9 lysosomal degradation. Also negatively regulates TLR4 signaling in macrophages by promoting lysosomal degradation of TLR4. Promotes megakaryocytic differentiation by increasing NF-kappa-B-dependent IL6 production and subsequently enhancing the association of STAT3 with GATA1. Not involved in the regulation of the EGF- and EGFR degradation pathway. This is Ras-related protein Rab-7b (RAB7B) from Homo sapiens (Human).